We begin with the raw amino-acid sequence, 153 residues long: Small ribosomal subunit protein bS16 (153 aa).

A disordered region spans residues 114–153 (ENEPVGEAITPKKKKAKAEDAEAAADAPAEAAAESEAADK). The segment covering 137–153 (AADAPAEAAAESEAADK) has biased composition (low complexity).

The protein belongs to the bacterial ribosomal protein bS16 family.

This chain is Small ribosomal subunit protein bS16, found in Rhodococcus opacus (strain B4).